The sequence spans 412 residues: Tyrosine--tRNA ligase 1 (412 aa).

Tyr-41 is an L-tyrosine binding site. The 'HIGH' region signature appears at 46–55; it reads ATADSLHVGH. Residues Tyr-174 and Gln-178 each coordinate L-tyrosine. The 'KMSKS' region motif lies at 234 to 238; sequence KMGKS. Lys-237 contacts ATP. The S4 RNA-binding domain occupies 348–411; that stretch reads LSLTDLLLEH…KKQHLHLRLE (64 aa).

The protein belongs to the class-I aminoacyl-tRNA synthetase family. TyrS type 1 subfamily. Homodimer.

It is found in the cytoplasm. It carries out the reaction tRNA(Tyr) + L-tyrosine + ATP = L-tyrosyl-tRNA(Tyr) + AMP + diphosphate + H(+). Catalyzes the attachment of tyrosine to tRNA(Tyr) in a two-step reaction: tyrosine is first activated by ATP to form Tyr-AMP and then transferred to the acceptor end of tRNA(Tyr). This Pseudomonas aeruginosa (strain ATCC 15692 / DSM 22644 / CIP 104116 / JCM 14847 / LMG 12228 / 1C / PRS 101 / PAO1) protein is Tyrosine--tRNA ligase 1.